A 295-amino-acid chain; its full sequence is Bifunctional protein FolD (295 aa).

NADP(+) is bound by residues 169–171 (GRS), Ser-194, and Ile-235.

This sequence belongs to the tetrahydrofolate dehydrogenase/cyclohydrolase family. In terms of assembly, homodimer.

It catalyses the reaction (6R)-5,10-methylene-5,6,7,8-tetrahydrofolate + NADP(+) = (6R)-5,10-methenyltetrahydrofolate + NADPH. It carries out the reaction (6R)-5,10-methenyltetrahydrofolate + H2O = (6R)-10-formyltetrahydrofolate + H(+). The protein operates within one-carbon metabolism; tetrahydrofolate interconversion. Functionally, catalyzes the oxidation of 5,10-methylenetetrahydrofolate to 5,10-methenyltetrahydrofolate and then the hydrolysis of 5,10-methenyltetrahydrofolate to 10-formyltetrahydrofolate. The chain is Bifunctional protein FolD from Acaryochloris marina (strain MBIC 11017).